We begin with the raw amino-acid sequence, 378 residues long: Erythronate-4-phosphate dehydrogenase (378 aa).

Substrate-binding residues include Ser-45 and Thr-66. Asp-146 and Thr-175 together coordinate NAD(+). Arg-208 is a catalytic residue. Asp-232 contributes to the NAD(+) binding site. Residue Glu-237 is part of the active site. Catalysis depends on His-254, which acts as the Proton donor. Gly-257 is a binding site for NAD(+). Tyr-258 contributes to the substrate binding site.

It belongs to the D-isomer specific 2-hydroxyacid dehydrogenase family. PdxB subfamily. In terms of assembly, homodimer.

The protein resides in the cytoplasm. It carries out the reaction 4-phospho-D-erythronate + NAD(+) = (R)-3-hydroxy-2-oxo-4-phosphooxybutanoate + NADH + H(+). It functions in the pathway cofactor biosynthesis; pyridoxine 5'-phosphate biosynthesis; pyridoxine 5'-phosphate from D-erythrose 4-phosphate: step 2/5. Its function is as follows. Catalyzes the oxidation of erythronate-4-phosphate to 3-hydroxy-2-oxo-4-phosphonooxybutanoate. This chain is Erythronate-4-phosphate dehydrogenase, found in Salmonella paratyphi A (strain ATCC 9150 / SARB42).